The chain runs to 558 residues: Ceramide kinase-like protein (558 aa).

The segment at 1–36 (MPWRRRRNRVSALEGGREEEAPPEAAAVPPALLTSP) is disordered. Short sequence motifs (nuclear localization signal) lie at residues 2-9 (PWRRRRNR) and 102-106 (KLKRR). The region spanning 164 to 339 (NRPKSLKILL…VDVCTFSTAG (176 aa)) is the DAGKc domain.

Phosphorylated on serine residues. As to expression, isoform 1 and isoform 2 are expressed in adult retina, liver and pancreas as well as in fetal brain, lung and kidney. Isoform 3 is expressed in adult retina as well as in fetal lung and liver. Isoform 4 is expressed in adult retina, lung and kidney as well as in fetal lung and liver. Moderately expressed in retina, kidney, lung, testis, trachea, and pancreas. Weakly expressed in brain, placenta and liver.

Its subcellular location is the cytoplasm. It localises to the nucleus. The protein resides in the nucleolus. The protein localises to the golgi apparatus. It is found in the trans-Golgi network. Its subcellular location is the endoplasmic reticulum. In terms of biological role, has no detectable ceramide-kinase activity. Overexpression of CERKL protects cells from apoptosis in oxidative stress conditions. This chain is Ceramide kinase-like protein (CERKL), found in Homo sapiens (Human).